Consider the following 122-residue polypeptide: MIQTESRLKVADNSGAKELLTIRVLGGSSRKFAGIGDIVVATVKSAAPGGAVKKGEVVKAVIVRTKSGAKRPDGSYIKFDENAAVLIRDDKTPRGTRIFGPVARELREGGYMKIVSLAPEVL.

It belongs to the universal ribosomal protein uL14 family. In terms of assembly, part of the 50S ribosomal subunit. Forms a cluster with proteins L3 and L19. In the 70S ribosome, L14 and L19 interact and together make contacts with the 16S rRNA in bridges B5 and B8.

In terms of biological role, binds to 23S rRNA. Forms part of two intersubunit bridges in the 70S ribosome. The chain is Large ribosomal subunit protein uL14 from Lactococcus lactis subsp. lactis (strain IL1403) (Streptococcus lactis).